A 139-amino-acid polypeptide reads, in one-letter code: uncharacterized protein (139 aa).

The helical transmembrane segment at 22 to 38 (SVMSVCFMTMSATVLPI) threads the bilayer.

It is found in the membrane. This is an uncharacterized protein from Saccharomyces cerevisiae (strain ATCC 204508 / S288c) (Baker's yeast).